The chain runs to 140 residues: ATP synthase epsilon chain (140 aa).

The protein belongs to the ATPase epsilon chain family. In terms of assembly, F-type ATPases have 2 components, CF(1) - the catalytic core - and CF(0) - the membrane proton channel. CF(1) has five subunits: alpha(3), beta(3), gamma(1), delta(1), epsilon(1). CF(0) has three main subunits: a, b and c.

The protein localises to the cell inner membrane. Functionally, produces ATP from ADP in the presence of a proton gradient across the membrane. This chain is ATP synthase epsilon chain (atpC), found in Vibrio alginolyticus.